Consider the following 1355-residue polypeptide: Ecdysone-induced protein 75B, isoform A (1355 aa).

Disordered stretches follow at residues 60-91, 126-228, 248-268, and 308-344; these read QHQPMHQLHHQHQHQHQHQQQAKSQQLKQQHS, RLKN…DSSY, ELEQQQTTGGSNAQQQVEAKP, and ATQQQQQQQQQHQHQQQRRDSSDSNCSLMSNSSNSSA. Over residues 66–76 the composition is skewed to basic residues; sequence QLHHQHQHQHQ. 2 stretches are compositionally biased toward low complexity: residues 77–91 and 143–179; these read HQQQAKSQQLKQQHS and TLVKTTTTSNSNSNNTQTTNSISQQQQQHQIVLQHQQ. Positions 200 to 213 are enriched in acidic residues; the sequence is SGIDEDSPNSDEDC. Polar residues-rich tracts occupy residues 218 to 228 and 254 to 264; these read PAGTSLEDSSY and TTGGSNAQQQV. 2 stretches are compositionally biased toward low complexity: residues 308–321 and 330–344; these read ATQQQQQQQQQHQH and DSNCSLMSNSSNSSA. The segment at residues 384–474 is a DNA-binding region (nuclear receptor); sequence SQLNYLCQKF…VGMSRDAVRF (91 aa). An NR C4-type; degenerate zinc finger spans residues 387–421; the sequence is NYLCQKFDEKLDTALSNSSANTGRNTPAVTANEDA. An NR C4-type zinc finger spans residues 438-457; it reads CTKNQQCSILRINRNRCQYC. The region spanning 508-756 is the NR LBD domain; it reads DQPRLLAAVL…QQMWSMEDGN (249 aa). 6 disordered regions span residues 780–821, 927–964, 987–1007, 1051–1117, 1147–1260, and 1312–1344; these read KSPL…SALA, LDSPTDSGIESGNEKNECKAVSSGGSSSCSSPRSSVDD, VSVSPVRSPQPSTSSHLKRQI, AEAD…SSHS, ENST…SNSA, and TVTASNGGPPSAAASPAPSSSPPASVGSPNPGL. 5 stretches are compositionally biased toward low complexity: residues 797–809, 948–960, 987–1001, 1053–1098, and 1106–1117; these read GSPSSSQPQGVSL, SSGGSSSCSSPRS, VSVSPVRSPQPSTSS, ADAS…AQSQ, and SSPKASMASSHS. Composition is skewed to polar residues over residues 1149 to 1162 and 1174 to 1196; these read STAASSTTNGVGNR and AVQNQQRWGSSSVITTTCQQRQQ. 3 stretches are compositionally biased toward low complexity: residues 1197-1233, 1242-1260, and 1315-1343; these read SVSPHSNGSSSSSSSSSSSSSSSSSTSSNCSSSSASS, STSNGTSAPASSSSGSNSA, and ASNGGPPSAAASPAPSSSPPASVGSPNPG.

It belongs to the nuclear hormone receptor family. NR1 subfamily.

It is found in the nucleus. Functionally, implicated in the regulation of ecdysone-triggered gene hierarchies. Probably plays a key role in mediating the regulation of the larval molt by 20-OH-ecdysone. The sequence is that of Ecdysone-induced protein 75B, isoform A (Eip75B) from Drosophila melanogaster (Fruit fly).